A 237-amino-acid chain; its full sequence is Peptidase E (237 aa).

Active-site charge relay system residues include serine 122, aspartate 137, and histidine 159.

It belongs to the peptidase S51 family.

The protein localises to the cytoplasm. The enzyme catalyses Dipeptidase E catalyzes the hydrolysis of dipeptides Asp-|-Xaa. It does not act on peptides with N-terminal Glu, Asn or Gln, nor does it cleave isoaspartyl peptides.. Hydrolyzes dipeptides containing N-terminal aspartate residues. May play a role in allowing the cell to use peptide aspartate to spare carbon otherwise required for the synthesis of the aspartate family of amino acids. This Shewanella baltica (strain OS155 / ATCC BAA-1091) protein is Peptidase E.